We begin with the raw amino-acid sequence, 260 residues long: Diphthine synthase (260 aa).

S-adenosyl-L-methionine-binding positions include Leu-9, Asp-85, Ile-88, 113–114 (TA), Leu-168, Ala-208, and His-233.

This sequence belongs to the diphthine synthase family. In terms of assembly, homodimer.

The enzyme catalyses 2-[(3S)-amino-3-carboxypropyl]-L-histidyl-[translation elongation factor 2] + 3 S-adenosyl-L-methionine = diphthine-[translation elongation factor 2] + 3 S-adenosyl-L-homocysteine + 3 H(+). The protein operates within protein modification; peptidyl-diphthamide biosynthesis. S-adenosyl-L-methionine-dependent methyltransferase that catalyzes the trimethylation of the amino group of the modified target histidine residue in translation elongation factor 2 (EF-2), to form an intermediate called diphthine. The three successive methylation reactions represent the second step of diphthamide biosynthesis. This is Diphthine synthase from Halobacterium salinarum (strain ATCC 29341 / DSM 671 / R1).